We begin with the raw amino-acid sequence, 237 residues long: Lipid A 1-diphosphate synthase (237 aa).

At 1-5 (MIKNL) the chain is on the cytoplasmic side. The helical transmembrane segment at 6 to 26 (PQIVLLNIVGLALFLSWYIPV) threads the bilayer. The Periplasmic segment spans residues 27 to 62 (NHGFWLPIDADIFYFFNQKLVESKAFLWLVALTNNR). A helical membrane pass occupies residues 63 to 83 (AFDGCSLLAMGMLMLSFWLKE). Residues 84 to 90 (NAPGRRR) lie on the Cytoplasmic side of the membrane. A helical membrane pass occupies residues 91–111 (IVIIGLVMLLTAVVLNQLGQA). Topologically, residues 112-145 (LIPVKRASPTLTFTDINRVSELLSVPTKDASRDS) are periplasmic. Position 167 (Lys167) is a topological domain, cytoplasmic. A helical transmembrane segment spans residues 168–188 (VAGLIALIIFVVFAFPRVMIG). The Periplasmic segment spans residues 189-194 (AHWFTD). The chain crosses the membrane as a helical span at residues 195-215 (IIVGSMTVILIGLPWVLLTPL). Over 216 to 237 (SDRLITFFDKSLPGKNKHFQNK) the chain is Cytoplasmic.

The protein belongs to the LpxT phosphotransferase family.

Its subcellular location is the cell inner membrane. It carries out the reaction di-trans,octa-cis-undecaprenyl diphosphate + alpha-Kdo-(2-&gt;4)-alpha-Kdo-(2-&gt;6)-lipid A (E. coli) = (Kdo)2-lipid A 1-diphosphate + di-trans,octa-cis-undecaprenyl phosphate. It functions in the pathway bacterial outer membrane biogenesis; lipopolysaccharide biosynthesis. With respect to regulation, inhibited by BasR. This regulation does not occur at the level of transcription, but rather following the assembly of LpxT into the inner membrane. Its function is as follows. Involved in the modification of the lipid A domain of lipopolysaccharides (LPS). Transfers a phosphate group from undecaprenyl pyrophosphate (C55-PP) to lipid A to form lipid A 1-diphosphate. Contributes to the recycling of undecaprenyl phosphate (C55-P). In vitro, has low undecaprenyl-diphosphate phosphatase activity. This chain is Lipid A 1-diphosphate synthase, found in Escherichia coli (strain K12).